The sequence spans 163 residues: Choriogonadotropin subunit beta (163 aa).

The signal sequence occupies residues 1 to 20 (MEMLQGLLLCLLLSTGGAWA). Intrachain disulfides connect Cys29–Cys76, Cys43–Cys91, Cys46–Cys129, Cys54–Cys107, Cys58–Cys109, and Cys112–Cys119. The N-linked (GlcNAc...) asparagine glycan is linked to Asn50. An N-linked (GlcNAc...) asparagine glycan is attached at Asn124. Residues 135 to 151 (QDSSSNVPPSNLTSPSQ) are compositionally biased toward polar residues. Positions 135–163 (QDSSSNVPPSNLTSPSQLLEPAVTPLVPQ) are disordered. Ser139 carries an O-linked (GalNAc...) serine glycan. The N-linked (GlcNAc...) asparagine glycan is linked to Asn145. An O-linked (GalNAc...) serine glycan is attached at Ser150.

The protein belongs to the glycoprotein hormones subunit beta family. As to quaternary structure, heterodimer of a common alpha chain and a unique beta chain which confers biological specificity to thyrotropin, lutropin, follitropin and gonadotropin.

The protein resides in the secreted. Stimulates the ovaries to synthesize the steroids that are essential for the maintenance of pregnancy. The polypeptide is Choriogonadotropin subunit beta (CGB) (Saimiri boliviensis boliviensis (Bolivian squirrel monkey)).